The chain runs to 667 residues: Protein adenylyltransferase SelO, mitochondrial (667 aa).

The N-terminal 6 residues, 1 to 6 (MASVRA), are a transit peptide targeting the mitochondrion. Gly154, Gly156, Lys177, Asp189, Gly190, Arg247, and Arg254 together coordinate ATP. The active-site Proton acceptor is Asp341. Residues Asn342 and Asp351 each coordinate Mg(2+). ATP is bound at residue Asp351. Residues 628–652 (YHSEEEATGPEAVARSTEEQSSYSN) are disordered. A Phosphothreonine modification is found at Thr635. A Phosphoserine modification is found at Ser651. Residue Sec665 is a non-standard amino acid, selenocysteine.

This sequence belongs to the SELO family. Requires Mg(2+) as cofactor.

It is found in the mitochondrion. The catalysed reaction is L-tyrosyl-[protein] + ATP = O-(5'-adenylyl)-L-tyrosyl-[protein] + diphosphate. It catalyses the reaction L-threonyl-[protein] + ATP = 3-O-(5'-adenylyl)-L-threonyl-[protein] + diphosphate. The enzyme catalyses L-seryl-[protein] + ATP = 3-O-(5'-adenylyl)-L-seryl-[protein] + diphosphate. Catalyzes the transfer of adenosine 5'-monophosphate (AMP) to Ser, Thr and Tyr residues of target proteins (AMPylation). May be a redox-active mitochondrial selenoprotein which interacts with a redox target protein. The sequence is that of Protein adenylyltransferase SelO, mitochondrial from Mus musculus (Mouse).